The sequence spans 115 residues: uncharacterized protein (115 aa).

This is an uncharacterized protein from Human cytomegalovirus (strain AD169) (HHV-5).